We begin with the raw amino-acid sequence, 212 residues long: 2-C-methyl-D-erythritol 4-phosphate cytidylyltransferase (212 aa).

This sequence belongs to the IspD/TarI cytidylyltransferase family. IspD subfamily.

It catalyses the reaction 2-C-methyl-D-erythritol 4-phosphate + CTP + H(+) = 4-CDP-2-C-methyl-D-erythritol + diphosphate. It functions in the pathway isoprenoid biosynthesis; isopentenyl diphosphate biosynthesis via DXP pathway; isopentenyl diphosphate from 1-deoxy-D-xylulose 5-phosphate: step 2/6. Its function is as follows. Catalyzes the formation of 4-diphosphocytidyl-2-C-methyl-D-erythritol from CTP and 2-C-methyl-D-erythritol 4-phosphate (MEP). The protein is 2-C-methyl-D-erythritol 4-phosphate cytidylyltransferase of Chlamydia felis (strain Fe/C-56) (Chlamydophila felis).